Reading from the N-terminus, the 159-residue chain is Phosphopantetheine adenylyltransferase (159 aa).

T9 serves as a coordination point for substrate. Residues T9–F10 and H17 each bind ATP. Residues K41, L73, and R87 each contribute to the substrate site. ATP is bound by residues G88–R90, E98, and Y123–T129.

Belongs to the bacterial CoaD family. In terms of assembly, homohexamer. It depends on Mg(2+) as a cofactor.

It is found in the cytoplasm. The catalysed reaction is (R)-4'-phosphopantetheine + ATP + H(+) = 3'-dephospho-CoA + diphosphate. Its pathway is cofactor biosynthesis; coenzyme A biosynthesis; CoA from (R)-pantothenate: step 4/5. Reversibly transfers an adenylyl group from ATP to 4'-phosphopantetheine, yielding dephospho-CoA (dPCoA) and pyrophosphate. In Pseudomonas putida (strain GB-1), this protein is Phosphopantetheine adenylyltransferase.